Here is a 490-residue protein sequence, read N- to C-terminus: Cobyric acid synthase (490 aa).

Residues 252–439 form the GATase cobBQ-type domain; the sequence is RLKVVVPVLP…LHGLFESTAA (188 aa). Residue cysteine 333 is the Nucleophile of the active site. Histidine 431 is a catalytic residue.

The protein belongs to the CobB/CobQ family. CobQ subfamily.

The protein operates within cofactor biosynthesis; adenosylcobalamin biosynthesis. Its function is as follows. Catalyzes amidations at positions B, D, E, and G on adenosylcobyrinic A,C-diamide. NH(2) groups are provided by glutamine, and one molecule of ATP is hydrogenolyzed for each amidation. The polypeptide is Cobyric acid synthase (Pseudomonas aeruginosa (strain LESB58)).